Consider the following 315-residue polypeptide: NAD-dependent protein deacylase sirtuin-5, mitochondrial (315 aa).

A mitochondrion-targeting transit peptide spans 1–39 (MSLLHFATRRLILQVLRELGLKAPPVHKTLKICIAMSRP). A Deacetylase sirtuin-type domain is found at 40 to 312 (SSNMADFRRF…PEALSPHESE (273 aa)). Position 61–80 (61–80 (GAGVSAESGVPTFRGPGGFW)) interacts with NAD(+). Substrate contacts are provided by tyrosine 105 and arginine 108. 143–146 (QNID) contacts NAD(+). The active-site Proton acceptor is the histidine 161. NAD(+)-binding positions include 254-256 (GTS), 280-282 (NTV), and cysteine 298.

It belongs to the sirtuin family. Class III subfamily. In terms of assembly, monomer. Homodimer. Interacts with CPS1.

Its subcellular location is the mitochondrion. It is found in the cytoplasm. The protein localises to the cytosol. It localises to the nucleus. The enzyme catalyses N(6)-malonyl-L-lysyl-[protein] + NAD(+) + H2O = 2''-O-malonyl-ADP-D-ribose + nicotinamide + L-lysyl-[protein]. It carries out the reaction N(6)-succinyl-L-lysyl-[protein] + NAD(+) + H2O = 2''-O-succinyl-ADP-D-ribose + nicotinamide + L-lysyl-[protein]. The catalysed reaction is N(6)-glutaryl-L-lysyl-[protein] + NAD(+) + H2O = 2''-O-glutaryl-ADP-D-ribose + nicotinamide + L-lysyl-[protein]. In terms of biological role, NAD-dependent lysine demalonylase, desuccinylase and deglutarylase that specifically removes malonyl, succinyl and glutaryl groups on target proteins. Activates CPS1 and contributes to the regulation of blood ammonia levels during prolonged fasting: acts by mediating desuccinylation and deglutarylation of CPS1, thereby increasing CPS1 activity in response to elevated NAD levels during fasting. Activates SOD1 by mediating its desuccinylation, leading to reduced reactive oxygen species. Activates SHMT2 by mediating its desuccinylation. Modulates ketogenesis through the desuccinylation and activation of HMGCS2. Has weak NAD-dependent protein deacetylase activity; however this activity may not be physiologically relevant in vivo. Can deacetylate cytochrome c (CYCS) and a number of other proteins in vitro such as UOX. This chain is NAD-dependent protein deacylase sirtuin-5, mitochondrial, found in Monodelphis domestica (Gray short-tailed opossum).